A 125-amino-acid polypeptide reads, in one-letter code: CLAVATA3/ESR (CLE)-related protein ESR3 (125 aa).

The first 26 residues, 1–26 (MASRMGMVAIMSLFVYAIVVPTSVNA), serve as a signal peptide directing secretion. A disordered region spans residues 45–125 (QQQGGFIGHR…IGPPPLPDRY (81 aa)). A hydroxyproline mark is found at Pro-75 and Pro-78. An O-linked (Ara...) hydroxyproline glycan is attached at Pro-78.

The protein belongs to the CLV3/ESR signal peptide family. In terms of processing, the O-glycosylation (arabinosylation) of the hydroxyproline Pro-78 enhances binding affinity of the ESR3p peptide for its receptor. In terms of tissue distribution, seed endosperm.

The protein localises to the secreted. Its subcellular location is the extracellular space. Extracellular signal peptide that regulates cell fate. This chain is CLAVATA3/ESR (CLE)-related protein ESR3, found in Zea mays (Maize).